Reading from the N-terminus, the 337-residue chain is MIIFFEIWHWSWALLGCYLNLLLAYLAIFKSPKAIKSYATLIINYAATDFVECALDSFLQTRLLAVPGEAELVYIFNGPCKYIGSISCKVGLSFFLHCLTHSVWSLLLSFGYRFYILHNPSLSRLVLLKLILVFYIPSLIQALTYWTIFASREEILPLARQWFPYYDLDAETGVLTGIIDLTNFVAIYSIGHICLPFFPVYITIFILRQKIINQLHVKQHVMSPDTKAAHSQLLKALTIQAFIPIFVGIAVTFYFLSQSGLVRSPILEYSIYAVAILAPALSPITYLYFVRPYRQNVKRFIANPFKILLNTNTGSSIGVFHSGGRPSNFATTLNTSR.

Transmembrane regions (helical) follow at residues 2-22, 90-110, 130-150, 187-207, 236-256, and 270-290; these read IIFF…LNLL, VGLS…LLSF, LILV…TIFA, IYSI…IFIL, ALTI…FYFL, and SIYA…LYFV.

Belongs to the nematode receptor-like protein srd family.

The protein resides in the membrane. The sequence is that of Serpentine receptor class delta-18 (srd-18) from Caenorhabditis elegans.